The following is a 1270-amino-acid chain: DNA-directed RNA polymerase subunit beta (1270 aa).

It belongs to the RNA polymerase beta chain family. As to quaternary structure, the RNAP catalytic core consists of 2 alpha, 1 beta, 1 beta' and 1 omega subunit. When a sigma factor is associated with the core the holoenzyme is formed, which can initiate transcription.

It catalyses the reaction RNA(n) + a ribonucleoside 5'-triphosphate = RNA(n+1) + diphosphate. In terms of biological role, DNA-dependent RNA polymerase catalyzes the transcription of DNA into RNA using the four ribonucleoside triphosphates as substrates. The polypeptide is DNA-directed RNA polymerase subunit beta (Christiangramia forsetii (strain DSM 17595 / CGMCC 1.15422 / KT0803) (Gramella forsetii)).